Consider the following 307-residue polypeptide: tRNA dimethylallyltransferase (307 aa).

10–17 is an ATP binding site; it reads GPTAVGKT. Residue 12-17 participates in substrate binding; it reads TAVGKT. The tract at residues 35 to 38 is interaction with substrate tRNA; that stretch reads DSMQ.

It belongs to the IPP transferase family. As to quaternary structure, monomer. It depends on Mg(2+) as a cofactor.

The catalysed reaction is adenosine(37) in tRNA + dimethylallyl diphosphate = N(6)-dimethylallyladenosine(37) in tRNA + diphosphate. Catalyzes the transfer of a dimethylallyl group onto the adenine at position 37 in tRNAs that read codons beginning with uridine, leading to the formation of N6-(dimethylallyl)adenosine (i(6)A). The polypeptide is tRNA dimethylallyltransferase (Ligilactobacillus salivarius (strain UCC118) (Lactobacillus salivarius)).